We begin with the raw amino-acid sequence, 116 residues long: Iron-sulfur cluster assembly protein CyaY (116 aa).

Belongs to the frataxin family.

In terms of biological role, involved in iron-sulfur (Fe-S) cluster assembly. May act as a regulator of Fe-S biogenesis. The protein is Iron-sulfur cluster assembly protein CyaY of Polaromonas sp. (strain JS666 / ATCC BAA-500).